The following is a 522-amino-acid chain: uncharacterized protein (522 aa).

Over residues 1–11 the composition is skewed to low complexity; the sequence is MSSITSRVSSR. The tract at residues 1–20 is disordered; it reads MSSITSRVSSRSSHELTEKK. 12 helical membrane-spanning segments follow: residues 69-89, 116-136, 141-161, 173-193, 204-224, 236-256, 303-323, 338-358, 367-387, 396-416, 428-448, and 462-482; these read VLWK…MIQY, SMTT…AILM, LSYF…LMAA, FLAG…TAMW, LCWY…SYGL, YVFI…VFIP, VIMI…GVFS, AVLN…SGVL, LLIG…IWKI, LVGV…LSLI, VTSA…PQLF, and AMIV…GYYI.

It belongs to the major facilitator superfamily. Allantoate permease family.

It localises to the endoplasmic reticulum. Its subcellular location is the membrane. This is an uncharacterized protein from Schizosaccharomyces pombe (strain 972 / ATCC 24843) (Fission yeast).